The primary structure comprises 117 residues: Colipase (117 aa).

The first 22 residues, 1–22 (MNIFNILLPIVVLLLVFGLTAA), serve as a signal peptide directing secretion. 5 cysteine pairs are disulfide-bonded: cysteine 39–cysteine 50, cysteine 45–cysteine 61, cysteine 49–cysteine 83, cysteine 71–cysteine 91, and cysteine 85–cysteine 109.

Belongs to the colipase family. Forms a 1:1 stoichiometric complex with pancreatic lipase.

It localises to the secreted. Its function is as follows. Colipase is a cofactor of pancreatic lipase. It allows the lipase to anchor itself to the lipid-water interface. Without colipase the enzyme is washed off by bile salts, which have an inhibitory effect on the lipase. The sequence is that of Colipase (clps) from Xenopus tropicalis (Western clawed frog).